Here is a 235-residue protein sequence, read N- to C-terminus: RNA-free ribonuclease P (235 aa).

Belongs to the HARP family.

The catalysed reaction is Endonucleolytic cleavage of RNA, removing 5'-extranucleotides from tRNA precursor.. In terms of biological role, RNA-free RNase P that catalyzes the removal of the 5'-leader sequence from pre-tRNA to produce the mature 5'-terminus. This Methanothrix thermoacetophila (strain DSM 6194 / JCM 14653 / NBRC 101360 / PT) (Methanosaeta thermophila) protein is RNA-free ribonuclease P.